Consider the following 117-residue polypeptide: Hainantoxin-XV (117 aa).

The first 20 residues, 1 to 20 (MKLCAVIIASLLVCVAVASS), serve as a signal peptide directing secretion. Residues 20–55 (SSDNQKEFAQEKEMTREETQSLGEHEKDDEVTGSEE) are disordered. Residues 21-56 (SDNQKEFAQEKEMTREETQSLGEHEKDDEVTGSEER) constitute a propeptide that is removed on maturation. The segment covering 23 to 55 (NQKEFAQEKEMTREETQSLGEHEKDDEVTGSEE) has biased composition (basic and acidic residues). Disulfide bonds link Cys58-Cys72, Cys65-Cys78, Cys69-Cys115, and Cys71-Cys91.

It belongs to the neurotoxin 03 (Tx2) family. 02 subfamily. HNTX-XV sub-subfamily. As to expression, expressed by the venom gland.

Its subcellular location is the secreted. Its function is as follows. Putative ion channel inhibitor. This Cyriopagopus hainanus (Chinese bird spider) protein is Hainantoxin-XV.